The following is a 427-amino-acid chain: MKGTIFAVALNHRSQLDAWQEAFQQSPIKAPPKTAVWFIKPRNTVIGCGEPIPFPQGENLLSGATVALIVGKTATKVREEDAAEYIAGYALANDVSLPEESFYRPAIKAKCRDGFCPIGETVALSNVDNLTIYTEINGRPADHWNTSDLQRNAAQLLSALSEFATLNPGDAILLGTPQARVEIQPGDRVRVLAEGFPPLENPVVDEREVTTRKSFPTLPHPHGTLFALGLNYADHASELEFKPPEEPLVFLKAPNTLTGDNQTSVRPNNIEYMHYEAELVVVIGKQARNVSEADAMDYVAGYTVCNDYAIRDYLENYYRPNLRVKSRDGLTPMLSTIVPKEAIPDPHNLTLRTFVNGELRQQGTTADLIFSVPFLIAYLSEFMTLNPGDMIATGTPKGLSDVGDEVVVEVEGVGRLVNRIVSEETAK.

Approximate repeat units lie at residues 1–202 and 203–405; these read MKGT…LENP and VVDE…VGDE. 3 residues coordinate a divalent metal cation: glutamate 276, glutamate 278, and aspartate 307.

This sequence belongs to the FAH family. As to quaternary structure, monomer. Mg(2+) serves as cofactor.

The catalysed reaction is (2E,4Z)-5-hydroxypenta-2,4-diene-1,2,5-tricarboxylate = (3E,5R)-5-carboxy-2-oxohept-3-enedioate. It catalyses the reaction (3E,5R)-5-carboxy-2-oxohept-3-enedioate + H(+) = (4Z)-2-oxohept-4-enedioate + CO2. Its pathway is aromatic compound metabolism; 4-hydroxyphenylacetate degradation; pyruvate and succinate semialdehyde from 4-hydroxyphenylacetate: step 4/7. It participates in aromatic compound metabolism; 4-hydroxyphenylacetate degradation; pyruvate and succinate semialdehyde from 4-hydroxyphenylacetate: step 5/7. Decarboxylates OPET (5-oxo-pent-3-ene-1,2,5-tricarboxylic acid) into HHDD (2-hydroxy-hept-2,4-diene-1,7-dioate) and isomerizes it to OHED (2-oxo-hept-3-ene-1,7-dioate). In Escherichia coli, this protein is Homoprotocatechuate catabolism bifunctional isomerase/decarboxylase (hpcE).